We begin with the raw amino-acid sequence, 134 residues long: Replication enhancer protein (134 aa).

It belongs to the geminiviridae replication enhancer protein family. In terms of assembly, homooligomer. Interacts with the replication-associated protein (REP). Interacts with host proliferating cell nuclear antigen (PCNA). Interacts with host retinoblastoma-related protein 1 (RBR1), and may thereby deregulate the host cell cycle. Oligomerization and interaction with PCNA are necessary for optimal replication enhancement.

In terms of biological role, increases viral DNA accumulation. Enhances infectivity and symptom expression. This is Replication enhancer protein from Solanum lycopersicum (Tomato).